The following is a 1242-amino-acid chain: Myosin-16 (1242 aa).

Residues 6–55 form the Myosin N-terminal SH3-like domain; that stretch reads MVDSHVWVEDPERAWIDGVVLNIKGEEAEIKTNDGRDVIANLSRLYPKDT. In terms of domain architecture, Myosin motor spans 60–729; sequence EGVEDMTRLS…QMAELDAHRT (670 aa). ATP-binding positions include 154 to 161 and 207 to 215; these read GESGSGKT and NNNSSRFGK. Actin-binding stretches follow at residues 493–527, 529–552, 587–610, and 610–632; these read LIEK…YHTF, DHKR…AGDV, FPPL…KLQL, and LQQL…KPNN. IQ domains are found at residues 732–761, 755–784, 780–809, 803–832, 828–857, and 851–880; these read LGES…ASVN, MRRA…EEAA, REEA…SALT, TKSS…TRAA, TTRA…VSLL, and LKRV…ADRK. Disordered regions lie at residues 869–893 and 908–1042; these read KQLG…ELSN and EQSD…ERKT. Positions 876 to 893 are enriched in basic and acidic residues; sequence QADRKEETEKERKVELSN. 6 repeat units span residues 876 to 908, 909 to 940, 941 to 965, 966 to 997, 998 to 1029, and 1030 to 1061. A 6 X 33 AA repeats of Q-S-D-D-x-E-E-x(2)-H-x-R-K-x-K-x(2)-I-x(2)-E-D-G-x(3)-S-x-V-x-H-S-x region spans residues 876 to 1061; that stretch reads QADRKEETEK…IQKSFVTCSE (186 aa). Residues 948–966 show a composition bias toward basic and acidic residues; sequence GHERKTKLSIESEDGHSDQ. A coiled-coil region spans residues 1079-1142; that stretch reads DTEIESLTAE…QLQDSLNRLL (64 aa). The disordered stretch occupies residues 1175-1242; the sequence is DLADSSENSE…DKEGGFEDYF (68 aa). Over residues 1179-1191 the composition is skewed to low complexity; the sequence is SSENSEASSSDSD. A compositionally biased stretch (polar residues) spans 1199-1224; that stretch reads PSSDNFSTFNPNQLQVIVQDLSTTEA. Residues 1225-1242 are compositionally biased toward basic and acidic residues; that stretch reads KGTESYDSDKEGGFEDYF.

It belongs to the TRAFAC class myosin-kinesin ATPase superfamily. Myosin family. Plant myosin class XI subfamily. In terms of assembly, homodimer. As to expression, expressed in flowers and leaves.

The protein resides in the cytoplasm. Functionally, myosin heavy chain that is required for the cell cycle-regulated transport of various organelles and proteins for their segregation. Functions by binding with its tail domain to receptor proteins on organelles and exerting force with its N-terminal motor domain against actin filaments, thereby transporting its cargo along polarized actin cables. The protein is Myosin-16 (XI-J) of Arabidopsis thaliana (Mouse-ear cress).